A 376-amino-acid polypeptide reads, in one-letter code: Protein FhaE (376 aa).

The N-terminal stretch at 1–37 is a signal peptide; sequence MSQIFADRRAAVPARVISFCGAALAVWAGLAVQPAMA.

The sequence is that of Protein FhaE (fhaE) from Bordetella pertussis (strain Tohama I / ATCC BAA-589 / NCTC 13251).